A 318-amino-acid chain; its full sequence is NADH-ubiquinone oxidoreductase chain 1 (318 aa).

The next 8 helical transmembrane spans lie at 2 to 22 (PMAN…FLML), 68 to 88 (ITLY…LWTP), 100 to 120 (LGLL…LWSG), 146 to 166 (LAII…STLI), 171 to 191 (HLWL…STLA), 231 to 251 (IIMM…DALS), 253 to 273 (ELYT…FLWI), and 294 to 314 (LPLT…ISSI).

It belongs to the complex I subunit 1 family. Core subunit of respiratory chain NADH dehydrogenase (Complex I) which is composed of 45 different subunits.

It localises to the mitochondrion inner membrane. It catalyses the reaction a ubiquinone + NADH + 5 H(+)(in) = a ubiquinol + NAD(+) + 4 H(+)(out). Functionally, core subunit of the mitochondrial membrane respiratory chain NADH dehydrogenase (Complex I) which catalyzes electron transfer from NADH through the respiratory chain, using ubiquinone as an electron acceptor. Essential for the catalytic activity and assembly of complex I. The chain is NADH-ubiquinone oxidoreductase chain 1 (MT-ND1) from Homo sapiens (Human).